The chain runs to 354 residues: Serum paraoxonase/lactonase 3 (354 aa).

A disulfide bond links Cys42 and Cys352. Residue Asn50 is glycosylated (N-linked (GlcNAc...) asparagine). 2 residues coordinate Ca(2+): Glu53 and Asp54. His114 (proton acceptor) is an active-site residue. Residue Ile116 participates in Ca(2+) binding. A Phosphoserine modification is found at Ser165. Positions 167, 168, 223, 268, and 269 each coordinate Ca(2+). Asn269 carries N-linked (GlcNAc...) asparagine glycosylation.

Belongs to the paraoxonase family. In terms of assembly, homodimer. The cofactor is Ca(2+). In terms of processing, glycosylated. Post-translationally, the signal sequence is not cleaved.

It is found in the secreted. It localises to the extracellular space. The catalysed reaction is a phenyl acetate + H2O = a phenol + acetate + H(+). It catalyses the reaction An aryl dialkyl phosphate + H2O = dialkyl phosphate + an aryl alcohol.. The enzyme catalyses an N-acyl-L-homoserine lactone + H2O = an N-acyl-L-homoserine + H(+). Has low activity towards the organophosphate paraxon and aromatic carboxylic acid esters. Rapidly hydrolyzes lactones such as statin prodrugs (e.g. lovastatin). Hydrolyzes aromatic lactones and 5- or 6-member ring lactones with aliphatic substituents but not simple lactones or those with polar substituents. In Oryctolagus cuniculus (Rabbit), this protein is Serum paraoxonase/lactonase 3 (PON3).